A 249-amino-acid polypeptide reads, in one-letter code: 2,5-diamino-6-ribosylamino-4(3H)-pyrimidinone 5'-phosphate reductase (249 aa).

NADP(+) is bound by residues Thr-79, Asp-83, Met-164, and 187–191 (GGIVI).

The protein belongs to the HTP reductase family. As to quaternary structure, homodimer.

It catalyses the reaction 2,5-diamino-6-(1-D-ribitylamino)pyrimidin-4(3H)-one 5'-phosphate + NADP(+) = 2,5-diamino-6-(1-D-ribosylamino)pyrimidin-4(3H)-one 5'-phosphate + NADPH + H(+). The catalysed reaction is 2,5-diamino-6-(1-D-ribitylamino)pyrimidin-4(3H)-one 5'-phosphate + NAD(+) = 2,5-diamino-6-(1-D-ribosylamino)pyrimidin-4(3H)-one 5'-phosphate + NADH + H(+). It participates in cofactor biosynthesis; riboflavin biosynthesis. Catalyzes an early step in riboflavin biosynthesis, the NADPH-dependent reduction of the ribose side chain of 2,5-diamino-6-ribosylamino-4(3H)-pyrimidinone 5'-phosphate, yielding 2,5-diamino-6-ribitylamino-4(3H)-pyrimidinone 5'-phosphate. The sequence is that of 2,5-diamino-6-ribosylamino-4(3H)-pyrimidinone 5'-phosphate reductase (RIB7) from Kluyveromyces marxianus (Yeast).